The following is a 382-amino-acid chain: Protein phosphatase 1A (382 aa).

Glycine 2 carries N-myristoyl glycine lipidation. Residues 23–291 (RYGLSSMQGW…DNMSVILICF (269 aa)) form the PPM-type phosphatase domain. Mn(2+) is bound by residues aspartate 60, glycine 61, aspartate 239, and aspartate 282. Phosphoserine is present on residues serine 375 and serine 377.

Belongs to the PP2C family. In terms of assembly, monomer. Interacts with SMAD2; the interaction dephosphorylates SMAD2 in its C-terminal SXS motif resulting in disruption of the SMAD2/SMAD4 complex, SMAD2 nuclear export and termination of the TGF-beta-mediated signaling. Interacts with SMAD2; the interaction dephosphorylates SMAD2 in its C-terminal SXS motif resulting in disruption of the SMAD2/SMAD4 complex, SMAD2 nuclear export and termination of the TGF-beta-mediated signaling. Interacts with the phosphorylated form of IKBKB/IKKB. Mg(2+) is required as a cofactor. Requires Mn(2+) as cofactor. N-myristoylation is essential for the recognition of its substrates for dephosphorylation.

It is found in the nucleus. The protein resides in the cytoplasm. It localises to the cytosol. The protein localises to the membrane. The catalysed reaction is O-phospho-L-seryl-[protein] + H2O = L-seryl-[protein] + phosphate. It catalyses the reaction O-phospho-L-threonyl-[protein] + H2O = L-threonyl-[protein] + phosphate. In terms of biological role, enzyme with a broad specificity. Negatively regulates TGF-beta signaling through dephosphorylating SMAD2 and SMAD3, resulting in their dissociation from SMAD4, nuclear export of the SMADs and termination of the TGF-beta-mediated signaling. Dephosphorylates PRKAA1 and PRKAA2. Plays an important role in the termination of TNF-alpha-mediated NF-kappa-B activation through dephosphorylating and inactivating IKBKB/IKKB. The polypeptide is Protein phosphatase 1A (Ppm1a) (Mus musculus (Mouse)).